The primary structure comprises 279 residues: Lipid phosphate phosphatase epsilon 1, chloroplastic (279 aa).

A chloroplast-targeting transit peptide spans 1–88 (MAASSSLLLL…SFINNSSEIR (88 aa)). The next 5 helical transmembrane spans lie at 126 to 142 (LWAV…SVVL), 164 to 184 (SHAQ…MEWL), 185 to 205 (GTNG…SYFI), 219 to 239 (VVVG…MWNS), and 255 to 275 (VFLF…LNWF).

The protein belongs to the PA-phosphatase related phosphoesterase family. As to expression, expressed in root tips, root branch points, cotyledons and leaves.

It localises to the plastid. The protein localises to the chloroplast inner membrane. With respect to regulation, inhibited by Mg(2+). Exhibits phosphatidate phosphatase (PAP) activity in vitro. May play a secondary role as PAP in plastids. In Arabidopsis thaliana (Mouse-ear cress), this protein is Lipid phosphate phosphatase epsilon 1, chloroplastic (LPPE1).